The sequence spans 296 residues: Coiled-coil domain-containing protein 69 (296 aa).

Basic residues predominate over residues 1–18 (MGCRHSRLSSCKPPKKKR). The tract at residues 1–41 (MGCRHSRLSSCKPPKKKRQEPEPEQPPRPEPHELGPLNGDT) is disordered. G2 is lipidated: N-myristoyl glycine. Over residues 19–33 (QEPEPEQPPRPEPHE) the composition is skewed to basic and acidic residues. Positions 48–272 (CASEEAERHQ…QEKEELLYRV (225 aa)) form a coiled coil. S154 and S241 each carry phosphoserine.

This sequence belongs to the CCDC69 family. As to expression, highly expressed in duodenum, esophagus, pancreas, prostate, salivary gland, thymus and urinary bladder.

It localises to the cytoplasm. Its subcellular location is the cytoskeleton. It is found in the spindle. The protein resides in the midbody. Its function is as follows. May act as a scaffold to regulate the recruitment and assembly of spindle midzone components. Required for the localization of AURKB and PLK1 to the spindle midzone. The sequence is that of Coiled-coil domain-containing protein 69 from Homo sapiens (Human).